The following is a 388-amino-acid chain: Succinate--CoA ligase [ADP-forming] subunit beta (388 aa).

An ATP-grasp domain is found at 9-244; it reads KQLFARSGLP…QSQEDPREAQ (236 aa). ATP-binding positions include Lys46, 53–55, Glu99, Thr102, and Glu107; that span reads GRG. Positions 199 and 213 each coordinate Mg(2+). Residues Asn264 and 321 to 323 contribute to the substrate site; that span reads GIV.

The protein belongs to the succinate/malate CoA ligase beta subunit family. In terms of assembly, heterotetramer of two alpha and two beta subunits. Mg(2+) serves as cofactor.

The catalysed reaction is succinate + ATP + CoA = succinyl-CoA + ADP + phosphate. It catalyses the reaction GTP + succinate + CoA = succinyl-CoA + GDP + phosphate. It functions in the pathway carbohydrate metabolism; tricarboxylic acid cycle; succinate from succinyl-CoA (ligase route): step 1/1. In terms of biological role, succinyl-CoA synthetase functions in the citric acid cycle (TCA), coupling the hydrolysis of succinyl-CoA to the synthesis of either ATP or GTP and thus represents the only step of substrate-level phosphorylation in the TCA. The beta subunit provides nucleotide specificity of the enzyme and binds the substrate succinate, while the binding sites for coenzyme A and phosphate are found in the alpha subunit. This is Succinate--CoA ligase [ADP-forming] subunit beta from Cronobacter sakazakii (strain ATCC BAA-894) (Enterobacter sakazakii).